The following is a 413-amino-acid chain: Probable Xaa-Pro aminopeptidase UREG_07123 (413 aa).

The Mn(2+) site is built by D194, D205, E340, and E379.

It belongs to the peptidase M24B family. Mn(2+) serves as cofactor.

It carries out the reaction Release of any N-terminal amino acid, including proline, that is linked to proline, even from a dipeptide or tripeptide.. Catalyzes the removal of a penultimate prolyl residue from the N-termini of peptides. This chain is Probable Xaa-Pro aminopeptidase UREG_07123, found in Uncinocarpus reesii (strain UAMH 1704).